A 570-amino-acid polypeptide reads, in one-letter code: Putative diflavin flavoprotein A 6 (570 aa).

The tract at residues 38–231 (AKGTTANSYL…FPTRLYATGH (194 aa)) is zinc metallo-hydrolase. Residues 260–402 (VALIYASAYG…AGTDFAQALK (143 aa)) enclose the Flavodoxin-like domain. A flavodoxin-reductase-like region spans residues 421–570 (VGRIVGSLCV…VHHRKSGNHY (150 aa)).

This sequence in the N-terminal section; belongs to the zinc metallo-hydrolase group 3 family. The protein in the C-terminal section; belongs to the flavodoxin reductase family. Fe cation serves as cofactor.

Its function is as follows. Mediates electron transfer from NADH to oxygen, reducing it to water. This modular protein has 3 redox cofactors, in other organisms the same activity requires 2 or 3 proteins. The polypeptide is Putative diflavin flavoprotein A 6 (dfa6) (Nostoc sp. (strain PCC 7120 / SAG 25.82 / UTEX 2576)).